Consider the following 161-residue polypeptide: MQTIEQQITNVIEESLTDMGFELVLVKFKGVNPKVVEILIDSLNSEKVSVEDCTKASRTISAILDVEDLIEAAYSLEVASSGLERPLVKFENYNRFLEREVKIKLKELLNGKTRYQGKIIKAENNKIYLKCEEQEVLIDYDLIKNANLVLTEEVFKKLLKQ.

It belongs to the RimP family.

It localises to the cytoplasm. Functionally, required for maturation of 30S ribosomal subunits. This chain is Ribosome maturation factor RimP, found in Rickettsia rickettsii (strain Iowa).